The primary structure comprises 79 residues: Immunity protein CdiI (79 aa).

2 consecutive transmembrane segments (helical) span residues 12 to 32 (IIFF…IGLI) and 51 to 71 (VVLF…LGLW).

As to quaternary structure, probably interacts with cognate toxin CdiA.

Its subcellular location is the cell inner membrane. Immunity protein component of a toxin-immunity protein module, which functions as a cellular contact-dependent growth inhibition (CDI) system. CDI modules allow bacteria to communicate with and inhibit the growth of closely related neighboring bacteria in a contact-dependent fashion. Protects cells against CdiA from the same strain, its cognate toxin protein. Growth inhibition is reversible upon induction of this protein, occurring about 2.5 hours after induction, and requires an energy source. Does not protect against non-cognate CdiA from E.coli strain 563 / UPEC, D.dadantii strain 3937 or Y.pestis strain CO92. The sequence is that of Immunity protein CdiI from Escherichia coli.